The chain runs to 485 residues: MSLRVYNTLSGTKEEFTPLVPGRVSMYVCGVTVYDHCHIGHARANVVFDMIYRYLRHAGYDVTYVRNYTDVDDKIINRANQEGVPYNAISERFIAEFDRDMAALGLDLPTHQPKATEHIAEMIDVISRLIEKGFAYAADGDVYFCVEKFDPYLKLSKRNLDEMQAGARIEVGEKKRHPMDFALWKGSKPGEPFWESPWGQGRPGWHIECSAMSMKYLGETFDIHGGGKDLVFPHHENEIAQSEAANGKPFAHYWIHNGFVNINSEKMSKSLGNFFTIKEVLEKYDAEVLRFFLLSAHYRSPIDFSDQNLREAEAGLERIYGTLAGIDENLTKGAEGTAEETDRELAEKAVTFPERFREAMDDDFNTAQALGFVFDLVRSANRVLGEGKGGGSNRALLAEARDRIRKVGAVLGIFTSEPRAFAERLKNRKAAELPITAEEIERLIAERIAARANRDFKRADEIRDSLAAKGIMLLDSPQGTTWKVK.

C29 contributes to the Zn(2+) binding site. The 'HIGH' region signature appears at 31–41 (VTVYDHCHIGH). Residues C209, H234, and E238 each contribute to the Zn(2+) site. Residues 266-270 (KMSKS) carry the 'KMSKS' region motif. K269 lines the ATP pocket.

The protein belongs to the class-I aminoacyl-tRNA synthetase family. As to quaternary structure, monomer. Zn(2+) serves as cofactor.

It is found in the cytoplasm. The enzyme catalyses tRNA(Cys) + L-cysteine + ATP = L-cysteinyl-tRNA(Cys) + AMP + diphosphate. This chain is Cysteine--tRNA ligase, found in Geobacter metallireducens (strain ATCC 53774 / DSM 7210 / GS-15).